The following is a 249-amino-acid chain: Mitochondrial intermembrane space import and assembly protein 40 (249 aa).

The transit peptide at 1 to 22 (MYRLATRRVLAQTTQTFSKRTF) directs the protein to the mitochondrion. Over 23–36 (SNQGFRAAKASKTN) the chain is Mitochondrial matrix. The chain crosses the membrane as a helical; Signal-anchor for type II membrane protein span at residues 37–55 (MYLGAGIALIPVIMSINYL). Topologically, residues 56–249 (NGNHIANEVD…KAKAEDSNTK (194 aa)) are mitochondrial intermembrane. A compositionally biased stretch (basic and acidic residues) spans 95 to 127 (KADVKTKVPAEEANPETRTETDKPSEESQKDEE). Residues 95 to 136 (KADVKTKVPAEEANPETRTETDKPSEESQKDEENSYEGAAYN) are disordered. 3 cysteine pairs are disulfide-bonded: C146-C148, C157-C190, and C167-C180. The CHCH domain maps to 154-198 (HGPCGEEFKEAFACFIYSESEPKGIECIKKFESMRNCFREHPEHY). Short sequence motifs (cx9C motif) lie at residues 157-167 (CGEEFKEAFAC) and 180-190 (CIKKFESMRNC). The tract at residues 202–249 (LYDDEEQEPLVDVNEKKGDASEQSAETIADDATKVVKEKAKAEDSNTK) is disordered. Positions 232-249 (DATKVVKEKAKAEDSNTK) are enriched in basic and acidic residues.

As to quaternary structure, monomer. Cu(2+) is required as a cofactor. Zn(2+) serves as cofactor.

The protein localises to the mitochondrion inner membrane. In terms of biological role, required for the import and folding of small cysteine-containing proteins (small Tim) in the mitochondrial intermembrane space (IMS). Forms a redox cycle with ERV1 that involves a disulfide relay system. Precursor proteins to be imported into the IMS are translocated in their reduced form into the mitochondria. The oxidized form of MIA40 forms a transient intermolecular disulfide bridge with the reduced precursor protein, resulting in oxidation of the precursor protein that now contains an intramolecular disulfide bond and is able to undergo folding in the IMS. In Debaryomyces hansenii (strain ATCC 36239 / CBS 767 / BCRC 21394 / JCM 1990 / NBRC 0083 / IGC 2968) (Yeast), this protein is Mitochondrial intermembrane space import and assembly protein 40 (MIA40).